We begin with the raw amino-acid sequence, 302 residues long: Recombination-associated protein RdgC (302 aa).

It belongs to the RdgC family.

It localises to the cytoplasm. It is found in the nucleoid. Functionally, may be involved in recombination. This chain is Recombination-associated protein RdgC, found in Actinobacillus pleuropneumoniae serotype 7 (strain AP76).